Reading from the N-terminus, the 102-residue chain is Iron-sulfur cluster assembly protein CyaY (102 aa).

It belongs to the frataxin family.

Functionally, involved in iron-sulfur (Fe-S) cluster assembly. May act as a regulator of Fe-S biogenesis. The sequence is that of Iron-sulfur cluster assembly protein CyaY from Actinobacillus succinogenes (strain ATCC 55618 / DSM 22257 / CCUG 43843 / 130Z).